Here is a 135-residue protein sequence, read N- to C-terminus: Large ribosomal subunit protein mL41A (135 aa).

A mitochondrion-targeting transit peptide spans 1 to 13 (MGLISKIARGLVR).

This sequence belongs to the mitochondrion-specific ribosomal protein mL41 family. Component of the mitochondrial ribosome large subunit (39S) which comprises a 16S rRNA and about 50 distinct proteins.

The protein resides in the mitochondrion. Its function is as follows. Component of the mitochondrial ribosome large subunit. Also involved in apoptosis and cell cycle. In Xenopus laevis (African clawed frog), this protein is Large ribosomal subunit protein mL41A (mrpl41-a).